The chain runs to 191 residues: Probable DNA-directed RNA polymerase subunit delta (191 aa).

The 70-residue stretch at 14 to 83 (LSMIEVARAI…GENKWGLRSW (70 aa)) folds into the HTH HARE-type domain. The disordered stretch occupies residues 119–191 (EDAIDYRDDD…EDEEDEEPVL (73 aa)).

In terms of assembly, RNAP is composed of a core of 2 alpha, a beta and a beta' subunits. The core is associated with a delta subunit and one of several sigma factors.

Participates in both the initiation and recycling phases of transcription. In the presence of the delta subunit, RNAP displays an increased specificity of transcription, a decreased affinity for nucleic acids, and an increased efficiency of RNA synthesis because of enhanced recycling. The sequence is that of Probable DNA-directed RNA polymerase subunit delta from Streptococcus pyogenes serotype M6 (strain ATCC BAA-946 / MGAS10394).